A 129-amino-acid chain; its full sequence is Large-conductance mechanosensitive channel (129 aa).

3 helical membrane-spanning segments follow: residues 8–28 (FIMR…AAFT), 30–50 (IVKS…AGAV), and 67–87 (GAVL…FLII).

It belongs to the MscL family. In terms of assembly, homopentamer.

It localises to the cell membrane. In terms of biological role, channel that opens in response to stretch forces in the membrane lipid bilayer. May participate in the regulation of osmotic pressure changes within the cell. This Oenococcus oeni (strain ATCC BAA-331 / PSU-1) protein is Large-conductance mechanosensitive channel.